The following is an 89-amino-acid chain: Large ribosomal subunit protein bL27 (89 aa).

The interval 1 to 21 (MAHKKAGGSSRNGRDSESKRL) is disordered.

This sequence belongs to the bacterial ribosomal protein bL27 family.

This is Large ribosomal subunit protein bL27 from Chelativorans sp. (strain BNC1).